The following is a 481-amino-acid chain: Aspartyl/glutamyl-tRNA(Asn/Gln) amidotransferase subunit B (481 aa).

The protein belongs to the GatB/GatE family. GatB subfamily. In terms of assembly, heterotrimer of A, B and C subunits.

The catalysed reaction is L-glutamyl-tRNA(Gln) + L-glutamine + ATP + H2O = L-glutaminyl-tRNA(Gln) + L-glutamate + ADP + phosphate + H(+). It catalyses the reaction L-aspartyl-tRNA(Asn) + L-glutamine + ATP + H2O = L-asparaginyl-tRNA(Asn) + L-glutamate + ADP + phosphate + 2 H(+). Allows the formation of correctly charged Asn-tRNA(Asn) or Gln-tRNA(Gln) through the transamidation of misacylated Asp-tRNA(Asn) or Glu-tRNA(Gln) in organisms which lack either or both of asparaginyl-tRNA or glutaminyl-tRNA synthetases. The reaction takes place in the presence of glutamine and ATP through an activated phospho-Asp-tRNA(Asn) or phospho-Glu-tRNA(Gln). In Prosthecochloris aestuarii (strain DSM 271 / SK 413), this protein is Aspartyl/glutamyl-tRNA(Asn/Gln) amidotransferase subunit B.